The primary structure comprises 118 residues: Holo-[acyl-carrier-protein] synthase (118 aa).

Asp-8 and Glu-58 together coordinate Mg(2+).

The protein belongs to the P-Pant transferase superfamily. AcpS family. The cofactor is Mg(2+).

The protein resides in the cytoplasm. The catalysed reaction is apo-[ACP] + CoA = holo-[ACP] + adenosine 3',5'-bisphosphate + H(+). Its function is as follows. Transfers the 4'-phosphopantetheine moiety from coenzyme A to a Ser of acyl-carrier-protein. The sequence is that of Holo-[acyl-carrier-protein] synthase from Streptococcus pyogenes serotype M28 (strain MGAS6180).